The sequence spans 163 residues: Nucleotide-binding protein NT01EI_1072 (163 aa).

The protein belongs to the YajQ family.

Nucleotide-binding protein. This chain is Nucleotide-binding protein NT01EI_1072, found in Edwardsiella ictaluri (strain 93-146).